Here is a 227-residue protein sequence, read N- to C-terminus: Pyridoxal 5'-phosphate synthase subunit PdxT (227 aa).

52–54 (GES) is a binding site for L-glutamine. The active-site Nucleophile is the Cys-84. L-glutamine contacts are provided by residues Arg-118 and 149–150 (IR). Residues His-189 and Glu-191 each act as charge relay system in the active site.

It belongs to the glutaminase PdxT/SNO family. As to quaternary structure, in the presence of PdxS, forms a dodecamer of heterodimers. Only shows activity in the heterodimer.

The catalysed reaction is aldehydo-D-ribose 5-phosphate + D-glyceraldehyde 3-phosphate + L-glutamine = pyridoxal 5'-phosphate + L-glutamate + phosphate + 3 H2O + H(+). It catalyses the reaction L-glutamine + H2O = L-glutamate + NH4(+). Its pathway is cofactor biosynthesis; pyridoxal 5'-phosphate biosynthesis. Functionally, catalyzes the hydrolysis of glutamine to glutamate and ammonia as part of the biosynthesis of pyridoxal 5'-phosphate. The resulting ammonia molecule is channeled to the active site of PdxS. The chain is Pyridoxal 5'-phosphate synthase subunit PdxT from Renibacterium salmoninarum (strain ATCC 33209 / DSM 20767 / JCM 11484 / NBRC 15589 / NCIMB 2235).